The following is a 296-amino-acid chain: UDP-N-acetylenolpyruvoylglucosamine reductase (296 aa).

Residues 26–191 (RIGGPANYFK…LSATFRLSRN (166 aa)) form the FAD-binding PCMH-type domain. Arg170 is a catalytic residue. Catalysis depends on Cys218, which acts as the Proton donor. The active site involves Glu287.

The protein belongs to the MurB family. FAD is required as a cofactor.

The protein resides in the cytoplasm. It catalyses the reaction UDP-N-acetyl-alpha-D-muramate + NADP(+) = UDP-N-acetyl-3-O-(1-carboxyvinyl)-alpha-D-glucosamine + NADPH + H(+). Its pathway is cell wall biogenesis; peptidoglycan biosynthesis. Its function is as follows. Cell wall formation. The protein is UDP-N-acetylenolpyruvoylglucosamine reductase of Chlamydia abortus (strain DSM 27085 / S26/3) (Chlamydophila abortus).